A 354-amino-acid chain; its full sequence is Methionine import ATP-binding protein MetN (354 aa).

The region spanning 8-250 (LDHIDITFRQ…PKEALTQKFI (243 aa)) is the ABC transporter domain. 42–49 (GYSGAGKS) lines the ATP pocket.

The protein belongs to the ABC transporter superfamily. Methionine importer (TC 3.A.1.24) family. In terms of assembly, the complex is composed of two ATP-binding proteins (MetN), two transmembrane proteins (MetI) and a solute-binding protein (MetQ).

It is found in the cell membrane. The enzyme catalyses L-methionine(out) + ATP + H2O = L-methionine(in) + ADP + phosphate + H(+). It carries out the reaction D-methionine(out) + ATP + H2O = D-methionine(in) + ADP + phosphate + H(+). In terms of biological role, part of the ABC transporter complex MetNIQ involved in methionine import. Responsible for energy coupling to the transport system. This chain is Methionine import ATP-binding protein MetN, found in Streptococcus pyogenes serotype M18 (strain MGAS8232).